Reading from the N-terminus, the 649-residue chain is MSHIIELPEMLANQIAAGEVIERPASVVKELVENAIDAGSSQIIIEIEEAGLKKVQITDNGHGIAHDEVELALRRHATSKIKNQADLFRIRTLGFRGEALPSIASVSVLTLLTAVDGASHGTKLVARGGEVEEVIPATSPVGTKVCVEDLFFNTPARLKYMKSQQAELSHIIDIVNRLGLAHPEISFSLISDGKEMTRTAGTGQLRQAIAGIYGLVSAKKMIEIENSDLDFEISGFVSLPELTRANRNYISLFINGRYIKNFLLNRAILDGFGSKLMVGRFPLAVIHIHIDPYLADVNVHPTKQEVRISKEKELMTLVSEAIANSLKEQTLIPDALENLAKSTVRNREKVEQTILPLKENTLYYEKTEPSRPSQTEVADYQVELTDEGQDLTLFAKETLDRLTKPAKLHFAERKPANYDQLDHPELDLASIDKAYDKLEREEASSFPELEFFGQMHGTYLFAQGRDGLYIIDQHAAQERVKYEEYRESIGNVDQSQQQLLVPYIFEFPADDALRLKERMPLLEEVGVFLAEYGENQFILREHPIWMAEEEIESGIYEMCDMLLLTKEVSIKKYRAELAIMMSCKRSIKANHRIDDHSARQLLYQLSQCDNPYNCPHGRPVLVHFTKSDMEKMFRRIQENHTSLRELGKY.

It belongs to the DNA mismatch repair MutL/HexB family.

This protein is involved in the repair of mismatches in DNA. It is required for dam-dependent methyl-directed DNA mismatch repair. May act as a 'molecular matchmaker', a protein that promotes the formation of a stable complex between two or more DNA-binding proteins in an ATP-dependent manner without itself being part of a final effector complex. The protein is DNA mismatch repair protein MutL of Streptococcus pneumoniae serotype 2 (strain D39 / NCTC 7466).